Consider the following 341-residue polypeptide: Putative ubiquitin-like-specific protease 1B (341 aa).

Catalysis depends on residues His-231, Asp-248, and Cys-300.

The protein belongs to the peptidase C48 family.

In terms of biological role, protease that catalyzes two essential functions in the SUMO pathway: processing of full-length SUMOs to their mature forms and deconjugation of SUMO from targeted proteins. The chain is Putative ubiquitin-like-specific protease 1B (ULP1B) from Arabidopsis thaliana (Mouse-ear cress).